The chain runs to 113 residues: Mini zinc finger protein 2 (113 aa).

A ZF-HD dimerization-type; degenerate zinc finger spans residues 24–83 (YGECRRNHAASTGGHAVDGCREFIAAEDGGGGNSTSAVGVAAAALKCAACGCHRSFHRRV). Positions 93 to 113 (DCASGDTSSSSPSSSSSLSSE) are disordered. The span at 100-113 (SSSSPSSSSSLSSE) shows a compositional bias: low complexity.

As to quaternary structure, homo- and heterodimers.

It localises to the cytoplasm. Inhibits zinc finger homeodomain (ZHD) transcription factors, by interacting with them to prevent both their nuclear localization and their DNA-binding properties. This chain is Mini zinc finger protein 2 (MIF3), found in Oryza sativa subsp. japonica (Rice).